The following is a 347-amino-acid chain: D-alanine--D-alanine ligase (347 aa).

Positions 131–333 (KRVLESAGIA…YPELIERLVD (203 aa)) constitute an ATP-grasp domain. ATP is bound at residue 161–216 (EEKLAYPVFTKPSNMGSSVGISKSENQEELRQALKLAFRYDSRVLVEQGVNAREIE). Asp-287, Glu-300, and Asn-302 together coordinate Mg(2+).

It belongs to the D-alanine--D-alanine ligase family. It depends on Mg(2+) as a cofactor. Mn(2+) serves as cofactor.

Its subcellular location is the cytoplasm. It carries out the reaction 2 D-alanine + ATP = D-alanyl-D-alanine + ADP + phosphate + H(+). The protein operates within cell wall biogenesis; peptidoglycan biosynthesis. Its function is as follows. Cell wall formation. The chain is D-alanine--D-alanine ligase from Streptococcus pneumoniae serotype 19F (strain G54).